Here is an 827-residue protein sequence, read N- to C-terminus: Zinc finger protein 438 (827 aa).

Disordered stretches follow at residues 1 to 31, 117 to 173, and 193 to 232; these read MQNSLSVPPRDEGESNIPSGTIQSRKGLQNK, LKLP…LYKP, and ALTNGSDHGDLRPPVTNTHGSLNPPATPASPTPEEPAKQD. Composition is skewed to polar residues over residues 16–31 and 150–159; these read NIPSGTIQSRKGLQNK and PAQTQMCPQM. A compositionally biased stretch (pro residues) spans 217-226; it reads PATPASPTPE. 3 C2H2-type zinc fingers span residues 506–528, 534–556, and 566–589; these read HRCHVCNHHFQFKQHLQDHMNTH, YSCRICRKSYVRPGSLSTHMKLH, and MCCEFCAKVFGHIRVYFGHLKEVH. The interval 682 to 723 is disordered; the sequence is FPGSKGTQEELVQHASHDWKRHPERGKPEKVHSSSEESHACP. Basic and acidic residues-rich tracts occupy residues 688 to 699 and 706 to 721; these read TQEELVQHASHD and RGKPEKVHSSSEESHA. The C2H2-type 4 zinc finger occupies 775–798; that stretch reads FNCLLCAEMLGQKEDLLHHWKHQH.

It is found in the nucleus. Functionally, acts as a transcriptional repressor. This Pongo abelii (Sumatran orangutan) protein is Zinc finger protein 438 (ZNF438).